The primary structure comprises 204 residues: Large ribosomal subunit protein eL15 (204 aa).

The protein belongs to the eukaryotic ribosomal protein eL15 family. As to quaternary structure, component of the large ribosomal subunit.

It localises to the cytoplasm. In terms of biological role, component of the large ribosomal subunit. The ribosome is a large ribonucleoprotein complex responsible for the synthesis of proteins in the cell. This is Large ribosomal subunit protein eL15 (rpl15) from Siniperca knerii (Big-eye mandarin fish).